A 65-amino-acid chain; its full sequence is Ferredoxin-like protein in vnf region (65 aa).

4Fe-4S ferredoxin-type domains lie at 2–30 and 32–65; these read AMAIDGYECTVCGDCEPVCPTGSIVFRDD and YAIEADSCNECTDVGEPRCLGVCPVDLCIQPLDD. Residues C10, C13, C16, C20, C39, C42, C50, and C54 each contribute to the [4Fe-4S] cluster site.

[4Fe-4S] cluster is required as a cofactor.

The protein is Ferredoxin-like protein in vnf region of Azotobacter vinelandii.